A 586-amino-acid chain; its full sequence is Pescadillo homolog (586 aa).

The tract at residues 1–54 is required for 28S ribosomal RNA processing; sequence MGGLEKKKYERGSATNYITRNKARKKLQLSLPDFRRLCILKGIYPHEPKHKKKV. The sufficient for nucleolar localization stretch occupies residues 1–257; that stretch reads MGGLEKKKYE…PKIESQAQAE (257 aa). Lys-98 is modified (N6-acetyllysine). A sufficient for interaction with MAP1B region spans residues 305–414; that stretch reads VTAQEEDRRK…LLLPVAEYFP (110 aa). In terms of domain architecture, BRCT spans 321–414; the sequence is KHKKLFEGLK…LLLPVAEYFP (94 aa). The disordered stretch occupies residues 447 to 508; it reads GEDPGNLEEE…QQRLGGKKPQ (62 aa). The segment covering 451-491 has biased composition (acidic residues); sequence GNLEEEEEDEDDEGDDSEGDGDVAVENEEEVVEAESEEEEE. Lys-515 participates in a covalent cross-link: Glycyl lysine isopeptide (Lys-Gly) (interchain with G-Cter in SUMO1); alternate. Lys-515 is covalently cross-linked (Glycyl lysine isopeptide (Lys-Gly) (interchain with G-Cter in SUMO2); alternate). Positions 537 to 586 are required for 28S ribosomal RNA processing; sequence MMKKREKYLYQKIMFGKRRKIREANKLAEKRKAHDDAVRSEKKAKRTRPV. Basic and acidic residues predominate over residues 562 to 577; that stretch reads KLAEKRKAHDDAVRSE. Residues 562 to 586 are disordered; sequence KLAEKRKAHDDAVRSEKKAKRTRPV.

The protein belongs to the pescadillo family. In terms of assembly, component of the PeBoW complex, composed of BOP1, PES1 and WDR12. The complex is held together by BOP1, which interacts with PES1 via its N-terminal domain and with WDR12 via a high-affinity interaction between the seven-bladed beta-propeller domains of the 2 proteins. The PeBoW complex associates with the 66S pre-ribosome. The PeBoW complex also associates with DDX27, PES1 interacts directly with DDX27. Interacts with IRS1 and UBTF. May interact with MAP1B. Post-translationally, sumoylated.

The protein localises to the nucleus. It localises to the nucleolus. It is found in the nucleoplasm. Its subcellular location is the chromosome. Component of the PeBoW complex, which is required for maturation of 28S and 5.8S ribosomal RNAs and formation of the 60S ribosome. The chain is Pescadillo homolog (Pes1) from Rattus norvegicus (Rat).